Consider the following 267-residue polypeptide: L-aspartate dehydrogenase (267 aa).

Residues alanine 124 and asparagine 190 each coordinate NAD(+). Histidine 218 is an active-site residue.

Belongs to the L-aspartate dehydrogenase family.

The catalysed reaction is L-aspartate + NADP(+) + H2O = oxaloacetate + NH4(+) + NADPH + H(+). The enzyme catalyses L-aspartate + NAD(+) + H2O = oxaloacetate + NH4(+) + NADH + H(+). It functions in the pathway cofactor biosynthesis; NAD(+) biosynthesis; iminoaspartate from L-aspartate (dehydrogenase route): step 1/1. Its function is as follows. Specifically catalyzes the NAD or NADP-dependent dehydrogenation of L-aspartate to iminoaspartate. This chain is L-aspartate dehydrogenase, found in Methanococcus maripaludis (strain C7 / ATCC BAA-1331).